The following is a 103-amino-acid chain: Large ribosomal subunit protein bL21 (103 aa).

Belongs to the bacterial ribosomal protein bL21 family. Part of the 50S ribosomal subunit. Contacts protein L20.

Its function is as follows. This protein binds to 23S rRNA in the presence of protein L20. The polypeptide is Large ribosomal subunit protein bL21 (Shewanella baltica (strain OS223)).